A 172-amino-acid polypeptide reads, in one-letter code: MRRQPAKVAALLLGLLLECTEAKKHCWYFEGLYPTYYICRSYEDCCGSRCCVRALSIQRLWYFWFLLMMGVLFCCGAGFFIRRRMYPPPLIEEPAFNVSYTRQPPNPGPGAQQPGPPYYTDPGGPGMNPVGNSMAMAFQVPPNSPQGSVACPPPPAYCNTPPPPYEQVVKAK.

The first 22 residues, 1–22 (MRRQPAKVAALLLGLLLECTEA), serve as a signal peptide directing secretion. At 23 to 60 (KKHCWYFEGLYPTYYICRSYEDCCGSRCCVRALSIQRL) the chain is on the extracellular side. A helical transmembrane segment spans residues 61–81 (WYFWFLLMMGVLFCCGAGFFI). Residues 82–172 (RRRMYPPPLI…PPYEQVVKAK (91 aa)) lie on the Cytoplasmic side of the membrane. The disordered stretch occupies residues 102 to 153 (RQPPNPGPGAQQPGPPYYTDPGGPGMNPVGNSMAMAFQVPPNSPQGSVACPP). Residues 104–119 (PPNPGPGAQQPGPPYY) are compositionally biased toward pro residues.

This sequence belongs to the VOPP1/ECOP family. Interacts with WWOX (via WW domain). As to expression, widely expressed with highest levels in thymus and ovary.

The protein resides in the cytoplasmic vesicle membrane. It is found in the late endosome membrane. It localises to the lysosome membrane. Increases the transcriptional activity of NFKB1 by facilitating its nuclear translocation, DNA-binding and associated apoptotic response, when overexpressed. May sequester WWOX in lysosomal vesicles and thereby regulate WWOX role as tumor suppressor. This is WW domain binding protein VOPP1 from Homo sapiens (Human).